We begin with the raw amino-acid sequence, 199 residues long: Inducible T-cell costimulator (199 aa).

An N-terminal signal peptide occupies residues 1–20 (MKSGLWYFFLFCLRIKVLTG). Residues 21–140 (EINGSANYEM…YESQLCCQLK (120 aa)) lie on the Extracellular side of the membrane. The Ig-like V-type domain occupies 30–132 (MFIFHNGGVQ…LTGGYLHIYE (103 aa)). Intrachain disulfides connect C42/C109 and C63/C83. N-linked (GlcNAc...) asparagine glycosylation is found at N89 and N110. Residues 141-161 (FWLPIGCAAFVVVCILGCILI) form a helical membrane-spanning segment. The Cytoplasmic portion of the chain corresponds to 162–199 (CWLTKKKYSSSVHDPNGEYMFMRAVNTAKKSRLTDVTL).

In terms of assembly, homodimer; disulfide-linked. Interacts with ICOSLG. Interacts with PIK3R1. Interacts with TBK1; this interaction is critical for the maturation of T follicular regulatory cells. Post-translationally, N-glycosylated. As to expression, activated T-cells. Highly expressed on tonsillar T-cells, which are closely associated with B-cells in the apical light zone of germinal centers, the site of terminal B-cell maturation. Expressed at lower levels in thymus, lung, lymph node and peripheral blood leukocytes. Expressed in the medulla of fetal and newborn thymus.

The protein resides in the cell membrane. It is found in the secreted. Its function is as follows. Stimulatory receptor expressed in activated or antigen-experienced T-cells that plays an important role in the immune response. Upon binding to its ligand ICOSL expressed on antigen presenting cells (APCs), delivers costimulatory signals that enhances all basic T-cell responses to a foreign antigen, namely proliferation, secretion of lymphokines including IL10, up-regulation of molecules that mediate cell-cell interaction, and effective help for antibody secretion by B-cells. Also acts as a costimulatory receptor critical for the differentiation of T follicular regulatory cells upon immune challenges such as viral infection. Mechanistically, potentiates TCR-induced calcium flux by augmenting PLCG1 activation and actin remodeling. In addition, activates PI3K signaling pathways independently of calcium flux. Essential both for efficient interaction between T and B-cells and for normal antibody responses to T-cell dependent antigens. Prevents the apoptosis of pre-activated T-cells. Plays a critical role in CD40-mediated class switching of immunoglobin isotypes. In Homo sapiens (Human), this protein is Inducible T-cell costimulator (ICOS).